Here is a 2079-residue protein sequence, read N- to C-terminus: von Willebrand factor A domain-containing protein DDB_G0286969 (2079 aa).

A VIT domain is found at 11–147; it reads EQILPSFISI…ELEIIITYST (137 aa). Positions 178–203 are disordered; it reads NENSTTNTNTQTQPQSVNTTTTTTPS. The segment covering 180–203 has biased composition (low complexity); that stretch reads NSTTNTNTQTQPQSVNTTTTTTPS. Residues 354–525 form the VWFA domain; the sequence is ELIFLVDVSE…KVMRQLKRAL (172 aa). 5 disordered regions span residues 761-800, 832-866, 956-1139, 1155-1203, and 1239-1294; these read PTTLSGSGIPFYNPSSPNHDRNINTTQQPTPTQSTPLKTP, PFVPSPNKLPTTTTSAPATTPITTPAPTTTTTEVK, AKPV…TKPT, NEPA…VSST, and DSNT…ADAE. 3 stretches are compositionally biased toward low complexity: residues 785 to 800, 841 to 866, and 956 to 973; these read TTQQPTPTQSTPLKTP, PTTTTSAPATTPITTPAPTTTTTEVK, and AKPVEPAVVQQQQPQQTK. A coiled-coil region spans residues 923–957; sequence EMIKIAEAKAAAEQKAAAEQKAIADAKAAAEQAAK. Residues 974–989 are compositionally biased toward basic and acidic residues; sequence PKADKQSKQNAKDNKQ. The segment covering 992 to 1006 has biased composition (low complexity); it reads KPVVVEQKPPVVTET. The segment covering 1007-1021 has biased composition (polar residues); the sequence is KPTVATESATPTKPT. Over residues 1023–1061 the composition is skewed to low complexity; sequence AQAAAAAAAAAQQAAQQAAATTPVKQQPTKQTTPNKSTP. A compositionally biased stretch (basic and acidic residues) spans 1092–1111; it reads KPVETKPVEQTKPVETKPVE. A compositionally biased stretch (low complexity) spans 1176-1198; sequence NNNNNNNNNNNNNNNNNNNNNNN. Over residues 1239-1272 the composition is skewed to polar residues; the sequence is DSNTKAPDSLKTTPIFSNGPQGISPSSGNGSNKS. Residues 1280–1292 are compositionally biased toward basic and acidic residues; it reads DRGGRGGRDRNAD. Residues 1317–1527 enclose the MIF4G domain; the sequence is LKKFKFNLNR…LDLIDLRANK (211 aa). The tract at residues 1530 to 1755 is disordered; it reads PKNSTQTKTK…PAPVEPVKPK (226 aa). 3 stretches are compositionally biased toward basic and acidic residues: residues 1538–1550, 1557–1599, and 1621–1634; these read TKKDESDKEERFI, QKRE…RDAP, and NNRDKGGRGGDRSG. Low complexity-rich tracts occupy residues 1635-1659 and 1688-1699; these read GKQSPSGKKDSGFGPSSGGSSLFGS and SSSIPSIPNRSN. A compositionally biased stretch (basic and acidic residues) spans 1725 to 1740; the sequence is SNDRDSRGPSKPDNRK. The 123-residue stretch at 1760–1882 folds into the MI domain; it reads KIEDDISMTL…PLNYLEEAYA (123 aa).

The chain is von Willebrand factor A domain-containing protein DDB_G0286969 from Dictyostelium discoideum (Social amoeba).